The primary structure comprises 172 residues: Peptide methionine sulfoxide reductase MsrA (172 aa).

C14 is an active-site residue.

This sequence belongs to the MsrA Met sulfoxide reductase family.

The enzyme catalyses L-methionyl-[protein] + [thioredoxin]-disulfide + H2O = L-methionyl-(S)-S-oxide-[protein] + [thioredoxin]-dithiol. It carries out the reaction [thioredoxin]-disulfide + L-methionine + H2O = L-methionine (S)-S-oxide + [thioredoxin]-dithiol. Its function is as follows. Has an important function as a repair enzyme for proteins that have been inactivated by oxidation. Catalyzes the reversible oxidation-reduction of methionine sulfoxide in proteins to methionine. This Streptomyces coelicolor (strain ATCC BAA-471 / A3(2) / M145) protein is Peptide methionine sulfoxide reductase MsrA.